The chain runs to 397 residues: Acetate kinase 2 (397 aa).

N10 contacts Mg(2+). An ATP-binding site is contributed by K17. Substrate is bound at residue R90. Residue D147 is the Proton donor/acceptor of the active site. ATP-binding positions include 207–211 (HLGNG), 281–283 (DAR), and 329–333 (GIGEN). E385 is a Mg(2+) binding site.

The protein belongs to the acetokinase family. In terms of assembly, homodimer. Mg(2+) serves as cofactor. Requires Mn(2+) as cofactor.

The protein resides in the cytoplasm. It carries out the reaction acetate + ATP = acetyl phosphate + ADP. The protein operates within metabolic intermediate biosynthesis; acetyl-CoA biosynthesis; acetyl-CoA from acetate: step 1/2. In terms of biological role, catalyzes the formation of acetyl phosphate from acetate and ATP. Can also catalyze the reverse reaction. This Vibrio parahaemolyticus serotype O3:K6 (strain RIMD 2210633) protein is Acetate kinase 2.